We begin with the raw amino-acid sequence, 77 residues long: MSCCGGSCGCGSACKCGNGCGGCKRYPDLENTATETLVLGVAPAMNSQYEASGETFVAENDACKCGSDCKCNPCTCK.

This sequence belongs to the metallothionein superfamily. Type 15 family. In terms of tissue distribution, expressed in vascular tissues of all organs. Expressed in root and leaf phloem, pollen and root hairs.

In terms of biological role, metallothioneins have a high content of cysteine residues that bind various heavy metals. Functions as a metal chelator of copper (Cu) and zinc (Zn). Functions cooperatively with the phytochelatin synthase PCS1 to protect plants from Cu and cadmium toxicity. Plays a role in Cu homeostasis, specifically in the remobilization of Cu from senescing leaves. The mobilization of Cu from internal sources is important for seed development. This Arabidopsis thaliana (Mouse-ear cress) protein is Metallothionein-like protein 2B (MT2B).